The chain runs to 1358 residues: DNA-directed RNA polymerase subunit beta (1358 aa).

It belongs to the RNA polymerase beta chain family. As to quaternary structure, the RNAP catalytic core consists of 2 alpha, 1 beta, 1 beta' and 1 omega subunit. When a sigma factor is associated with the core the holoenzyme is formed, which can initiate transcription.

It carries out the reaction RNA(n) + a ribonucleoside 5'-triphosphate = RNA(n+1) + diphosphate. DNA-dependent RNA polymerase catalyzes the transcription of DNA into RNA using the four ribonucleoside triphosphates as substrates. This Methylococcus capsulatus (strain ATCC 33009 / NCIMB 11132 / Bath) protein is DNA-directed RNA polymerase subunit beta.